We begin with the raw amino-acid sequence, 403 residues long: Tryptophan synthase beta chain (403 aa).

Lysine 88 bears the N6-(pyridoxal phosphate)lysine mark.

This sequence belongs to the TrpB family. In terms of assembly, tetramer of two alpha and two beta chains. Requires pyridoxal 5'-phosphate as cofactor.

It catalyses the reaction (1S,2R)-1-C-(indol-3-yl)glycerol 3-phosphate + L-serine = D-glyceraldehyde 3-phosphate + L-tryptophan + H2O. It participates in amino-acid biosynthesis; L-tryptophan biosynthesis; L-tryptophan from chorismate: step 5/5. The beta subunit is responsible for the synthesis of L-tryptophan from indole and L-serine. The polypeptide is Tryptophan synthase beta chain (Shewanella frigidimarina (strain NCIMB 400)).